The chain runs to 428 residues: Inward rectifier potassium channel 2 (428 aa).

Residues 1-81 lie on the Cytoplasmic side of the membrane; that stretch reads MGSVRTNRYS…IFTTCVDIRW (81 aa). Cys-76 is subject to S-nitrosocysteine. The helical transmembrane segment at 82–106 threads the bilayer; it reads RWMLVIFCLAFVLSWLFFGCVFWLI. Topologically, residues 107 to 128 are extracellular; sequence ALLHGDLDTSKVSKACVSEVNS. Residues 129 to 140 constitute an intramembrane region (helical; Pore-forming); that stretch reads FTAAFLFSIETQ. The segment at residues 141 to 147 is an intramembrane region (pore-forming); the sequence is TTIGYGF. Residues 142–147 carry the Selectivity filter motif; that stretch reads TIGYGF. Residues 148–156 are Extracellular-facing; that stretch reads RCVTDECPI. The helical transmembrane segment at 157 to 178 threads the bilayer; it reads AVFMVVFQSIVGCIIDAFIIGA. The Cytoplasmic segment spans residues 179 to 428; the sequence is VMAKMAKPKK…PRPLRRESEI (250 aa). Residues 181–208 form a polyphosphoinositide (PIP2)-binding region; that stretch reads AKMAKPKKRNETLVFSHNAVIAMRDGKL. Residues 383–428 are disordered; sequence TSKEEEEDSENGVPESTSTDSPPGIDLHNQASVPLEPRPLRRESEI. The PDZ-binding motif lies at 426-428; that stretch reads SEI.

It belongs to the inward rectifier-type potassium channel (TC 1.A.2.1) family. KCNJ2 subfamily. Homotetramer. Homomultimeric and heteromultimeric association with KCNJ4/Kir2.3. Can form heteromeric channels with Kir2.6/KCNJ18. Associates, via its PDZ-recognition domain, with a complex containing LIN7A, LIN7B, LIN7C, DLG1, CASK and APBA1. In terms of processing, S-nitrosylation increases the open probability and inward rectifying currents. In terms of tissue distribution, prominently expressed in the central nervous system. Also found in other excitable tissues such as heart and skeletal muscle.

It is found in the cell membrane. Its subcellular location is the sarcolemma. The protein resides in the T-tubule. It carries out the reaction K(+)(in) = K(+)(out). Its activity is regulated as follows. Activated by phosphatidylinositol 4,5 biphosphate (PtdIns(4,5)P2). Functionally, inward rectifier potassium channels are characterized by a greater tendency to allow potassium to flow into the cell rather than out of it. Their voltage dependence is regulated by the concentration of extracellular potassium; as external potassium is raised, the voltage range of the channel opening shifts to more positive voltages. The inward rectification is mainly due to the blockage of outward current by internal magnesium. Can be blocked by extracellular barium and cesium. Probably participates in establishing action potential waveform and excitability of neuronal and muscle tissues. The polypeptide is Inward rectifier potassium channel 2 (Kcnj2) (Mus musculus (Mouse)).